The sequence spans 715 residues: Fatty acid oxidation complex subunit alpha (715 aa).

An enoyl-CoA hydratase region spans residues 8 to 197 (NSQPSAFSLT…NLGLVEEAVP (190 aa)). Positions 313 to 715 (ATIKKVGVLG…MANEEQSFYS (403 aa)) are 3-hydroxyacyl-CoA dehydrogenase.

The protein in the N-terminal section; belongs to the enoyl-CoA hydratase/isomerase family. In the central section; belongs to the 3-hydroxyacyl-CoA dehydrogenase family. Heterotetramer of two alpha chains (FadJ) and two beta chains (FadI).

The protein localises to the cytoplasm. The catalysed reaction is a (3S)-3-hydroxyacyl-CoA = a (2E)-enoyl-CoA + H2O. The enzyme catalyses a 4-saturated-(3S)-3-hydroxyacyl-CoA = a (3E)-enoyl-CoA + H2O. It catalyses the reaction a (3S)-3-hydroxyacyl-CoA + NAD(+) = a 3-oxoacyl-CoA + NADH + H(+). It carries out the reaction (3S)-3-hydroxybutanoyl-CoA = (3R)-3-hydroxybutanoyl-CoA. The protein operates within lipid metabolism; fatty acid beta-oxidation. Catalyzes the formation of a hydroxyacyl-CoA by addition of water on enoyl-CoA. Also exhibits 3-hydroxyacyl-CoA epimerase and 3-hydroxyacyl-CoA dehydrogenase activities. The polypeptide is Fatty acid oxidation complex subunit alpha (Photobacterium profundum (strain SS9)).